The chain runs to 816 residues: Sucrose synthase 1 (816 aa).

Positions 280–757 (MVFNVVIMSP…GLQRIEEKYT (478 aa)) are GT-B glycosyltransferase.

The protein belongs to the glycosyltransferase 1 family. Plant sucrose synthase subfamily. Homotetramer or heterotetramer with SUS2. Expressed in root phloem and leaf mesophyll. Expressed in phloem tissues and aleurone layers of seeds and at lower levels in the pericarp and endosperm cells (at protein level). Predominantly expressed in elongating tissues including roots, developing leaves and internodes.

It carries out the reaction an NDP-alpha-D-glucose + D-fructose = a ribonucleoside 5'-diphosphate + sucrose + H(+). Its function is as follows. Sucrose-cleaving enzyme that provides UDP-glucose and fructose for various metabolic pathways. The chain is Sucrose synthase 1 (SUS1) from Oryza sativa subsp. japonica (Rice).